The chain runs to 423 residues: uncharacterized protein (423 aa).

It belongs to the asfivirus E423R family.

Its subcellular location is the virion. This is an uncharacterized protein from Ornithodoros (relapsing fever ticks).